A 406-amino-acid polypeptide reads, in one-letter code: MARAFLFVLDSFGVGGAPDAAAYGDEGADTLGHIAEFCAAGAGDRAGLRSGPLSLPNMSELGLMHIARAASGQFPAGMPLPEKVYGVYGTANEISRGKDTPSGHWEIAGTPVNFDWGYFPTEGDAFPPELIEALCRAGDVPGILGNCHASGTEIIARLGEEHIRTGKPICYTSSDSVFQVAAQEAHFGLDRLLTFCRIARGLLDPYNIGRIIARPFIGQSASTFQRTGNRRDFSVLPPEPTLLDRLLQHGRHVHAVGKIGDIFAHQGISRVIKATGNEALMDASLSAIDAAEDGDLVFTNFVDFDMNYGHRRDVPGYAAALEAFDARLPEVHKKLKPGDLVVLTADHGCDPTWRGTDHTRERVPIIAFGPGIRSRSIGVRRTYADIGESIARHLGIPAGPHGRSFL.

6 residues coordinate Mn(2+): D10, D305, H310, D346, H347, and H358.

It belongs to the phosphopentomutase family. Mn(2+) serves as cofactor.

The protein resides in the cytoplasm. The catalysed reaction is 2-deoxy-alpha-D-ribose 1-phosphate = 2-deoxy-D-ribose 5-phosphate. It carries out the reaction alpha-D-ribose 1-phosphate = D-ribose 5-phosphate. Its pathway is carbohydrate degradation; 2-deoxy-D-ribose 1-phosphate degradation; D-glyceraldehyde 3-phosphate and acetaldehyde from 2-deoxy-alpha-D-ribose 1-phosphate: step 1/2. Functionally, isomerase that catalyzes the conversion of deoxy-ribose 1-phosphate (dRib-1-P) and ribose 1-phosphate (Rib-1-P) to deoxy-ribose 5-phosphate (dRib-5-P) and ribose 5-phosphate (Rib-5-P), respectively. The polypeptide is Phosphopentomutase (Rhizobium etli (strain ATCC 51251 / DSM 11541 / JCM 21823 / NBRC 15573 / CFN 42)).